A 525-amino-acid polypeptide reads, in one-letter code: GMP synthase [glutamine-hydrolyzing] (525 aa).

A Glutamine amidotransferase type-1 domain is found at 9-207 (RILILDFGSQ…VRDICQCEAL (199 aa)). Cysteine 86 functions as the Nucleophile in the catalytic mechanism. Residues histidine 181 and glutamate 183 contribute to the active site. The GMPS ATP-PPase domain occupies 208-400 (WTPAKIIDDA…LGLPYDMLYR (193 aa)). Position 235–241 (235–241 (SGGVDSS)) interacts with ATP.

Homodimer.

The enzyme catalyses XMP + L-glutamine + ATP + H2O = GMP + L-glutamate + AMP + diphosphate + 2 H(+). It functions in the pathway purine metabolism; GMP biosynthesis; GMP from XMP (L-Gln route): step 1/1. Catalyzes the synthesis of GMP from XMP. The protein is GMP synthase [glutamine-hydrolyzing] of Shigella boydii serotype 18 (strain CDC 3083-94 / BS512).